Here is a 245-residue protein sequence, read N- to C-terminus: 1-(5-phosphoribosyl)-5-[(5-phosphoribosylamino)methylideneamino] imidazole-4-carboxamide isomerase (245 aa).

D8 acts as the Proton acceptor in catalysis. The Proton donor role is filled by D129.

This sequence belongs to the HisA/HisF family.

It is found in the cytoplasm. It catalyses the reaction 1-(5-phospho-beta-D-ribosyl)-5-[(5-phospho-beta-D-ribosylamino)methylideneamino]imidazole-4-carboxamide = 5-[(5-phospho-1-deoxy-D-ribulos-1-ylimino)methylamino]-1-(5-phospho-beta-D-ribosyl)imidazole-4-carboxamide. The protein operates within amino-acid biosynthesis; L-histidine biosynthesis; L-histidine from 5-phospho-alpha-D-ribose 1-diphosphate: step 4/9. The sequence is that of 1-(5-phosphoribosyl)-5-[(5-phosphoribosylamino)methylideneamino] imidazole-4-carboxamide isomerase from Rhodopseudomonas palustris (strain BisB5).